Consider the following 390-residue polypeptide: Phosphoglycerate kinase (390 aa).

Substrate-binding positions include 19–21 (DYN), Arg-34, 57–60 (HLGR), Arg-115, and Arg-148. Residues Lys-198, Gly-289, Glu-320, and 347 to 350 (GGDS) contribute to the ATP site.

The protein belongs to the phosphoglycerate kinase family. Monomer.

Its subcellular location is the cytoplasm. The catalysed reaction is (2R)-3-phosphoglycerate + ATP = (2R)-3-phospho-glyceroyl phosphate + ADP. The protein operates within carbohydrate degradation; glycolysis; pyruvate from D-glyceraldehyde 3-phosphate: step 2/5. The protein is Phosphoglycerate kinase (pgk) of Thermus thermophilus (strain ATCC 27634 / DSM 579 / HB8).